The chain runs to 151 residues: Deoxyuridine 5'-triphosphate nucleotidohydrolase (151 aa).

Substrate-binding positions include 70-72, asparagine 83, 87-89, and methionine 97; these read RSG and LID.

This sequence belongs to the dUTPase family. Mg(2+) is required as a cofactor.

It catalyses the reaction dUTP + H2O = dUMP + diphosphate + H(+). It participates in pyrimidine metabolism; dUMP biosynthesis; dUMP from dCTP (dUTP route): step 2/2. In terms of biological role, this enzyme is involved in nucleotide metabolism: it produces dUMP, the immediate precursor of thymidine nucleotides and it decreases the intracellular concentration of dUTP so that uracil cannot be incorporated into DNA. The sequence is that of Deoxyuridine 5'-triphosphate nucleotidohydrolase from Pseudomonas fluorescens (strain ATCC BAA-477 / NRRL B-23932 / Pf-5).